Reading from the N-terminus, the 475-residue chain is Methylenetetrahydrofolate--tRNA-(uracil-5-)-methyltransferase TrmFO (475 aa).

Residue 9–14 (GGGLAG) coordinates FAD. Positions 427 to 447 (APRNETGRRLRGPEKAALKKR) are disordered.

It belongs to the MnmG family. TrmFO subfamily. The cofactor is FAD.

Its subcellular location is the cytoplasm. The catalysed reaction is uridine(54) in tRNA + (6R)-5,10-methylene-5,6,7,8-tetrahydrofolate + NADH + H(+) = 5-methyluridine(54) in tRNA + (6S)-5,6,7,8-tetrahydrofolate + NAD(+). It catalyses the reaction uridine(54) in tRNA + (6R)-5,10-methylene-5,6,7,8-tetrahydrofolate + NADPH + H(+) = 5-methyluridine(54) in tRNA + (6S)-5,6,7,8-tetrahydrofolate + NADP(+). Its function is as follows. Catalyzes the folate-dependent formation of 5-methyl-uridine at position 54 (M-5-U54) in all tRNAs. The polypeptide is Methylenetetrahydrofolate--tRNA-(uracil-5-)-methyltransferase TrmFO (Methylobacterium radiotolerans (strain ATCC 27329 / DSM 1819 / JCM 2831 / NBRC 15690 / NCIMB 10815 / 0-1)).